A 353-amino-acid chain; its full sequence is Protein-arginine kinase (353 aa).

The region spanning 24 to 256 is the Phosphagen kinase C-terminal domain; the sequence is IVLSSRIRLA…RTVIDTEEQA (233 aa). Residues 27–31, His93, Arg127, 178–182, and 209–214 contribute to the ATP site; these read SSRIR, RASVM, and RGLYGE. Positions 339–344 match the RDXXRA motif of the pArg binding pocket involved in allosteric regulation motif; it reads RDVRRA.

The protein belongs to the ATP:guanido phosphotransferase family.

It catalyses the reaction L-arginyl-[protein] + ATP = N(omega)-phospho-L-arginyl-[protein] + ADP + H(+). With respect to regulation, appears to be allosterically activated by the binding of pArg-containing polypeptides to the pArg-binding pocket localized in the C-terminal domain of McsB. Functionally, catalyzes the specific phosphorylation of arginine residues in proteins. The sequence is that of Protein-arginine kinase from Symbiobacterium thermophilum (strain DSM 24528 / JCM 14929 / IAM 14863 / T).